Here is a 347-residue protein sequence, read N- to C-terminus: Protease HtpX homolog (347 aa).

A run of 3 helical transmembrane segments spans residues 8–28 (IAFG…VVIA), 46–66 (ALTA…IAIV), and 76–96 (WGFI…TYIA). Residue H174 participates in Zn(2+) binding. E175 is a catalytic residue. H178 provides a ligand contact to Zn(2+). 2 consecutive transmembrane segments (helical) span residues 185 to 205 (ALML…VSSV) and 221 to 241 (LLAA…LLVL). E248 is a Zn(2+) binding site.

The protein belongs to the peptidase M48B family. The cofactor is Zn(2+).

The protein resides in the cell membrane. This Pyrobaculum islandicum (strain DSM 4184 / JCM 9189 / GEO3) protein is Protease HtpX homolog.